Consider the following 269-residue polypeptide: Indole-3-glycerol phosphate synthase (269 aa).

Belongs to the TrpC family.

The enzyme catalyses 1-(2-carboxyphenylamino)-1-deoxy-D-ribulose 5-phosphate + H(+) = (1S,2R)-1-C-(indol-3-yl)glycerol 3-phosphate + CO2 + H2O. It participates in amino-acid biosynthesis; L-tryptophan biosynthesis; L-tryptophan from chorismate: step 4/5. The sequence is that of Indole-3-glycerol phosphate synthase from Rhodococcus jostii (strain RHA1).